The primary structure comprises 428 residues: Adenylosuccinate synthetase (428 aa).

GTP contacts are provided by residues 12-18 (GDEGKGK) and 40-42 (GHT). Catalysis depends on D13, which acts as the Proton acceptor. Residues D13 and G40 each contribute to the Mg(2+) site. Residues 13–16 (DEGK), 38–41 (NAGH), T129, R143, Q224, T239, and R303 each bind IMP. H41 (proton donor) is an active-site residue. Residue 299–305 (VTTGRIR) coordinates substrate. Residues R305, 331–333 (KVD), and 410–412 (AYG) contribute to the GTP site.

Belongs to the adenylosuccinate synthetase family. As to quaternary structure, homodimer. Mg(2+) serves as cofactor.

The protein resides in the cytoplasm. It catalyses the reaction IMP + L-aspartate + GTP = N(6)-(1,2-dicarboxyethyl)-AMP + GDP + phosphate + 2 H(+). It functions in the pathway purine metabolism; AMP biosynthesis via de novo pathway; AMP from IMP: step 1/2. Functionally, plays an important role in the de novo pathway of purine nucleotide biosynthesis. Catalyzes the first committed step in the biosynthesis of AMP from IMP. This Francisella tularensis subsp. tularensis (strain FSC 198) protein is Adenylosuccinate synthetase.